A 389-amino-acid polypeptide reads, in one-letter code: Succinate--CoA ligase [ADP-forming] subunit beta (389 aa).

Residues lysine 46, 53-55 (GRG), glutamate 99, cysteine 102, and glutamate 107 each bind ATP. Mg(2+)-binding residues include asparagine 199 and aspartate 213. Substrate is bound by residues asparagine 264 and 321–323 (GIV).

The protein belongs to the succinate/malate CoA ligase beta subunit family. In terms of assembly, heterotetramer of two alpha and two beta subunits. Mg(2+) serves as cofactor.

It catalyses the reaction succinate + ATP + CoA = succinyl-CoA + ADP + phosphate. The enzyme catalyses GTP + succinate + CoA = succinyl-CoA + GDP + phosphate. It participates in carbohydrate metabolism; tricarboxylic acid cycle; succinate from succinyl-CoA (ligase route): step 1/1. In terms of biological role, succinyl-CoA synthetase functions in the citric acid cycle (TCA), coupling the hydrolysis of succinyl-CoA to the synthesis of either ATP or GTP and thus represents the only step of substrate-level phosphorylation in the TCA. The beta subunit provides nucleotide specificity of the enzyme and binds the substrate succinate, while the binding sites for coenzyme A and phosphate are found in the alpha subunit. The chain is Succinate--CoA ligase [ADP-forming] subunit beta from Haemophilus influenzae (strain PittEE).